The sequence spans 103 residues: MQQQKIRIRLKAFDYRLIDQSAAEIVDTAKRTGAIVRGPVPLPTRIQRFDILRSPHVNKTSRDQLEIRTHQRLMDIVDPTDKTVDALMKLDLPAGVDVEIKLQ.

It belongs to the universal ribosomal protein uS10 family. As to quaternary structure, part of the 30S ribosomal subunit.

Its function is as follows. Involved in the binding of tRNA to the ribosomes. This Burkholderia mallei (strain NCTC 10247) protein is Small ribosomal subunit protein uS10.